The sequence spans 231 residues: dTTP/UTP pyrophosphatase (231 aa).

D85 functions as the Proton acceptor in the catalytic mechanism.

This sequence belongs to the Maf family. YhdE subfamily. A divalent metal cation serves as cofactor.

The protein localises to the cytoplasm. It catalyses the reaction dTTP + H2O = dTMP + diphosphate + H(+). The catalysed reaction is UTP + H2O = UMP + diphosphate + H(+). Nucleoside triphosphate pyrophosphatase that hydrolyzes dTTP and UTP. May have a dual role in cell division arrest and in preventing the incorporation of modified nucleotides into cellular nucleic acids. The sequence is that of dTTP/UTP pyrophosphatase from Psychrobacter arcticus (strain DSM 17307 / VKM B-2377 / 273-4).